A 438-amino-acid chain; its full sequence is Probable glucose-6-phosphate isomerase (438 aa).

The active-site Proton donor is E280. Active-site residues include H301 and K410.

It belongs to the GPI family.

It is found in the cytoplasm. It catalyses the reaction alpha-D-glucose 6-phosphate = beta-D-fructose 6-phosphate. Its pathway is carbohydrate biosynthesis; gluconeogenesis. It participates in carbohydrate degradation; glycolysis; D-glyceraldehyde 3-phosphate and glycerone phosphate from D-glucose: step 2/4. Functionally, catalyzes the reversible isomerization of glucose-6-phosphate to fructose-6-phosphate. The chain is Probable glucose-6-phosphate isomerase from Methanococcus maripaludis (strain DSM 14266 / JCM 13030 / NBRC 101832 / S2 / LL).